Consider the following 234-residue polypeptide: MTTSDLPAFWTVIPAAGVGSRMRADRPKQYLDLAGRTVIERTLDCFLEHPMLRGLVVCLAEDDPYWPGLDCAASRHVQRAAGGVERADSVLSGLLRLLELGARADDWVLVHDAARPNLTRGDLDRLLEELAEDPVGGLLAVPARDTLKRSDRDGRVSETIDRSVVWLAYTPQMFRLGALHRALADALVAGVAITDEASAMEWAGYAPKLVEGRADNLKITTPEDLLRLQRSFPH.

Belongs to the IspD/TarI cytidylyltransferase family. IspD subfamily.

It carries out the reaction 2-C-methyl-D-erythritol 4-phosphate + CTP + H(+) = 4-CDP-2-C-methyl-D-erythritol + diphosphate. The protein operates within isoprenoid biosynthesis; isopentenyl diphosphate biosynthesis via DXP pathway; isopentenyl diphosphate from 1-deoxy-D-xylulose 5-phosphate: step 2/6. Its function is as follows. Catalyzes the formation of 4-diphosphocytidyl-2-C-methyl-D-erythritol from CTP and 2-C-methyl-D-erythritol 4-phosphate (MEP). The chain is 2-C-methyl-D-erythritol 4-phosphate cytidylyltransferase from Pseudomonas paraeruginosa (strain DSM 24068 / PA7) (Pseudomonas aeruginosa (strain PA7)).